A 300-amino-acid polypeptide reads, in one-letter code: Metal tolerance protein 12 (300 aa).

At 1–26 (MESPESFSTMFMKPIRHILSEKKSRK) the chain is on the cytoplasmic side. The helical transmembrane segment at 27-47 (IALFLLINTAYMVVEFVAGFM) threads the bilayer. Over 48-50 (SNS) the chain is Vacuolar. The chain crosses the membrane as a helical span at residues 51–71 (LGLISDACHMLFDCAALAIGL). The Cytoplasmic segment spans residues 72-91 (YASYISRLPANHQYNYGRGR). Residues 92 to 112 (FEVLSGYVNAVFLVLVGALIV) form a helical membrane-spanning segment. The Vacuolar segment spans residues 113-128 (LESIERILDPQEISTN). A helical membrane pass occupies residues 129–149 (SLLVVSVGGLLVNIVGLIFFH). The Cytoplasmic segment spans residues 150–160 (EEHHHAHGGSG). A helical transmembrane segment spans residues 161 to 181 (IFLHVLADTMGSVGVVISTLL). At 182–186 (IKYKG) the chain is on the vacuolar side. A helical transmembrane segment spans residues 187–207 (WLVADPASSIFISILIIASVI). At 208–300 (PLLRNSAEIL…WTLQVESVNS (93 aa)) the chain is on the cytoplasmic side.

It belongs to the cation diffusion facilitator (CDF) transporter (TC 2.A.4) family. SLC30A subfamily.

It is found in the vacuole membrane. Functionally, involved in sequestration of excess metal in the cytoplasm into vacuoles to maintain metal homeostasis. The polypeptide is Metal tolerance protein 12 (MTP12) (Arabidopsis thaliana (Mouse-ear cress)).